The primary structure comprises 544 residues: Glucose starvation modulator protein 1 (544 aa).

The zn(2)-C6 fungal-type DNA-binding region spans 20–48; it reads CVFCHSKHLQCSNERPCKNCMKRNLGDQC. Residues 65–93 form a disordered region; that stretch reads KKMKSRTNSISSSYRSPSVSESPQNPYTH. A compositionally biased stretch (low complexity) spans 70 to 86; sequence RTNSISSSYRSPSVSES. The 73-residue stretch at 403–475 folds into the PAS domain; that stretch reads SLIDYEKLLL…FKLFKSVAVG (73 aa).

Belongs to the ERT1/acuK family.

It localises to the nucleus. Functionally, transcription factor which regulates nonfermentable carbon utilization. This chain is Glucose starvation modulator protein 1 (GSM1), found in Debaryomyces hansenii (strain ATCC 36239 / CBS 767 / BCRC 21394 / JCM 1990 / NBRC 0083 / IGC 2968) (Yeast).